The sequence spans 141 residues: Protein MGF 100-2L (141 aa).

It belongs to the asfivirus MGF 100 family.

In terms of biological role, plays a role in virus cell tropism, and may be required for efficient virus replication in macrophages. The polypeptide is Protein MGF 100-2L (African swine fever virus (isolate Tick/South Africa/Pretoriuskop Pr4/1996) (ASFV)).